Here is a 1352-residue protein sequence, read N- to C-terminus: Astrotactin-2 (1352 aa).

Residues 1–31 (MAAAGARRSPGRGLGLRGRPRLGFHPGPPPP) form a disordered region. A signal peptide spans 1–51 (MAAAGARRSPGRGLGLRGRPRLGFHPGPPPPPPPPLLLLFLLLLPPPPLLA). At 52–218 (GATAAAASRE…IVEEQMHILH (167 aa)) the chain is on the lumenal side. N-linked (GlcNAc...) asparagine glycosylation occurs at Asn-180. A helical membrane pass occupies residues 219–239 (ISVMGGLIALLLLLLVFTVAL). Residues 240 to 447 (YAQRRWQKRR…KGLLKSPVNK (208 aa)) are Cytoplasmic-facing. Disordered regions lie at residues 308 to 327 (EEEEEPPRRANHVSREDEFG) and 375 to 421 (TPVE…ADDE). A compositionally biased stretch (polar residues) spans 383–392 (QPASRSSTSA). The chain crosses the membrane as a helical span at residues 448–468 (TALTLIAVSSCILAMVCGNQM). Residues 469–1352 (SCPLTVKVTL…RNTYGETKGR (884 aa)) lie on the Lumenal side of the membrane. EGF-like domains follow at residues 523-563 (VRDL…HLCV), 664-708 (PVRD…SGCY), and 712-764 (KGID…KSCL). 9 cysteine pairs are disulfide-bonded: Cys-527–Cys-539, Cys-535–Cys-546, Cys-548–Cys-562, Cys-668–Cys-681, Cys-675–Cys-692, Cys-694–Cys-707, Cys-716–Cys-728, Cys-724–Cys-748, and Cys-750–Cys-763. Asn-796 is a glycosylation site (N-linked (GlcNAc...) asparagine). 3 disulfide bridges follow: Cys-838–Cys-1000, Cys-929–Cys-990, and Cys-996–Cys-1003. Asn-1033 carries an N-linked (GlcNAc...) asparagine glycan. Cystine bridges form between Cys-1049–Cys-1060, Cys-1062–Cys-1075, Cys-1149–Cys-1171, Cys-1203–Cys-1290, and Cys-1311–Cys-1334. A Fibronectin type-III domain is found at 1079 to 1201 (PQPVLRLSPT…SELSTVTLRT (123 aa)).

Belongs to the astrotactin family. In terms of assembly, interacts with ASTN1; the interaction is not calcium-dependent. Detected in cerebellum granule neurons; not detected in astroglia (at protein level). Detected primarily in cerebellum, and at lower levels in brain cortex, olfactory bulb, hindbrain and hippocampus dentate gyrus. Between 6 and 10 days after birth, when granule cell migration occurs in the cerebellum, detected in granule cell precursors in the external germinal layer, the molecular layer, the internal granule layer and in Purkinje neurons. Detected in postmitotic neurons in adult cerebellum.

It localises to the membrane. The protein resides in the perikaryon. Its subcellular location is the cytoplasm. The protein localises to the cell cortex. It is found in the early endosome. It localises to the late endosome. The protein resides in the cytoplasmic vesicle. Its subcellular location is the clathrin-coated vesicle. Its function is as follows. Mediates recycling of the neuronal cell adhesion molecule ASTN1 to the anterior pole of the cell membrane in migrating neurons. Promotes ASTN1 internalization and intracellular transport of endocytosed ASTN1. Selectively binds inositol-4,5-bisphosphate, inositol-3,4,5-trisphosphate and inositol-1,3,4,5-tetrakisphosphate, suggesting it is recruited to membranes that contain lipids with a phosphoinositide headgroup. The chain is Astrotactin-2 (Astn2) from Mus musculus (Mouse).